The primary structure comprises 818 residues: LPS-assembly protein LptD (818 aa).

Residues 1–33 (MVNETMKHQFKFNPLATAIFTLLCSGSIQSSYA) form the signal peptide.

This sequence belongs to the LptD family. Component of the lipopolysaccharide transport and assembly complex. Interacts with LptE and LptA.

It localises to the cell outer membrane. Functionally, together with LptE, is involved in the assembly of lipopolysaccharide (LPS) at the surface of the outer membrane. The protein is LPS-assembly protein LptD of Acinetobacter baumannii (strain ATCC 19606 / DSM 30007 / JCM 6841 / CCUG 19606 / CIP 70.34 / NBRC 109757 / NCIMB 12457 / NCTC 12156 / 81).